The primary structure comprises 158 residues: UPF0098 protein YbhB (158 aa).

This sequence belongs to the UPF0098 family. Homodimer.

It is found in the cytoplasm. The sequence is that of UPF0098 protein YbhB (ybhB) from Escherichia coli (strain K12).